We begin with the raw amino-acid sequence, 585 residues long: Aspartate--tRNA ligase (585 aa).

Glu173 is an L-aspartate binding site. Residues 197–200 (QTLK) are aspartate. Residue Arg219 coordinates L-aspartate. ATP is bound by residues 219-221 (RDE) and Gln228. Residue His446 coordinates L-aspartate. Glu480 serves as a coordination point for ATP. Arg487 serves as a coordination point for L-aspartate. 532 to 535 (GLDR) contacts ATP.

This sequence belongs to the class-II aminoacyl-tRNA synthetase family. Type 1 subfamily. In terms of assembly, homodimer.

It localises to the cytoplasm. The enzyme catalyses tRNA(Asp) + L-aspartate + ATP = L-aspartyl-tRNA(Asp) + AMP + diphosphate. Catalyzes the attachment of L-aspartate to tRNA(Asp) in a two-step reaction: L-aspartate is first activated by ATP to form Asp-AMP and then transferred to the acceptor end of tRNA(Asp). The chain is Aspartate--tRNA ligase from Bacteroides fragilis (strain YCH46).